A 172-amino-acid chain; its full sequence is Monopolar attachment protein 1 (172 aa).

The span at 15-30 (KKNKNPKISNSKKKNS) shows a compositional bias: basic residues. The disordered stretch occupies residues 15–43 (KKNKNPKISNSKKKNSTRPALQDKTNQTL). Positions 31 to 43 (TRPALQDKTNQTL) are enriched in polar residues. The POLO box domain (PBD)-binding motif lies at 100–102 (STP).

As to quaternary structure, interacts with rec8, Interacts with plo1.

The protein resides in the nucleus. The protein localises to the chromosome. Its subcellular location is the centromere. It localises to the kinetochore. In terms of biological role, plays an important role in chromosome segregation during meiosis I by allowing meiotic rec8 to establish cohesion at the centromeric central core and thereby promote the side-by-side structure of kinetochores at meiosis I. Enables monopolar attachment during meiosis I. Required to facilitate kinetochore mono-orientation during meiosis I, when kinetochores on sister chromosomes face the same direction and are thus captured and pulled by spindle fibers from the same pole. Acts in collaboration with plo1. The chain is Monopolar attachment protein 1 (moa1) from Schizosaccharomyces pombe (strain 972 / ATCC 24843) (Fission yeast).